A 196-amino-acid polypeptide reads, in one-letter code: ATP-dependent Clp protease proteolytic subunit (196 aa).

S101 (nucleophile) is an active-site residue. H126 is an active-site residue.

This sequence belongs to the peptidase S14 family. Component of the chloroplastic Clp protease core complex.

The protein localises to the plastid. Its subcellular location is the chloroplast stroma. The enzyme catalyses Hydrolysis of proteins to small peptides in the presence of ATP and magnesium. alpha-casein is the usual test substrate. In the absence of ATP, only oligopeptides shorter than five residues are hydrolyzed (such as succinyl-Leu-Tyr-|-NHMec, and Leu-Tyr-Leu-|-Tyr-Trp, in which cleavage of the -Tyr-|-Leu- and -Tyr-|-Trp bonds also occurs).. Its function is as follows. Cleaves peptides in various proteins in a process that requires ATP hydrolysis. Has a chymotrypsin-like activity. Plays a major role in the degradation of misfolded proteins. This Morus indica (Mulberry) protein is ATP-dependent Clp protease proteolytic subunit.